A 434-amino-acid chain; its full sequence is Histidinol dehydrogenase (434 aa).

Residues tyrosine 130, glutamine 191, and asparagine 214 each coordinate NAD(+). Substrate contacts are provided by serine 237, glutamine 259, and histidine 262. Positions 259 and 262 each coordinate Zn(2+). Active-site proton acceptor residues include glutamate 327 and histidine 328. Positions 328, 361, 415, and 420 each coordinate substrate. Residue aspartate 361 coordinates Zn(2+). Residue histidine 420 participates in Zn(2+) binding.

This sequence belongs to the histidinol dehydrogenase family. Requires Zn(2+) as cofactor.

The enzyme catalyses L-histidinol + 2 NAD(+) + H2O = L-histidine + 2 NADH + 3 H(+). It functions in the pathway amino-acid biosynthesis; L-histidine biosynthesis; L-histidine from 5-phospho-alpha-D-ribose 1-diphosphate: step 9/9. In terms of biological role, catalyzes the sequential NAD-dependent oxidations of L-histidinol to L-histidinaldehyde and then to L-histidine. This is Histidinol dehydrogenase from Chromobacterium violaceum (strain ATCC 12472 / DSM 30191 / JCM 1249 / CCUG 213 / NBRC 12614 / NCIMB 9131 / NCTC 9757 / MK).